The chain runs to 227 residues: UPF0173 metal-dependent hydrolase BCB4264_A4722 (227 aa).

Belongs to the UPF0173 family.

This is UPF0173 metal-dependent hydrolase BCB4264_A4722 from Bacillus cereus (strain B4264).